The following is a 145-amino-acid chain: Glycine-rich protein (145 aa).

The N-terminal stretch at 1–19 (MKLTLAVVVVFAYIATTNA) is a signal peptide.

Component of the acid-insoluble and acid-soluble organic matrix of calcified layers of the shell (at protein level).

It is found in the secreted. This is Glycine-rich protein from Lottia gigantea (Giant owl limpet).